The chain runs to 365 residues: Uroporphyrinogen decarboxylase (365 aa).

Residues 27–31, Asp-77, Tyr-154, Ser-209, and His-327 contribute to the substrate site; that span reads RQAGR.

It belongs to the uroporphyrinogen decarboxylase family. As to quaternary structure, homodimer.

Its subcellular location is the cytoplasm. The enzyme catalyses uroporphyrinogen III + 4 H(+) = coproporphyrinogen III + 4 CO2. The protein operates within porphyrin-containing compound metabolism; protoporphyrin-IX biosynthesis; coproporphyrinogen-III from 5-aminolevulinate: step 4/4. Its function is as follows. Catalyzes the decarboxylation of four acetate groups of uroporphyrinogen-III to yield coproporphyrinogen-III. In Alkalilimnicola ehrlichii (strain ATCC BAA-1101 / DSM 17681 / MLHE-1), this protein is Uroporphyrinogen decarboxylase.